A 250-amino-acid chain; its full sequence is Peptidyl-tRNA hydrolase (250 aa).

Residue Tyr14 coordinates tRNA. His19 functions as the Proton acceptor in the catalytic mechanism. 3 residues coordinate tRNA: Phe64, Asn66, and Asn112. The interval 192-250 (MGDGNQRPGGVKTDPAQLEKAPPKAQSHIRQARQNQKKPNIPESGPMAEMLKKLLGKKD) is disordered. The segment covering 219 to 229 (HIRQARQNQKK) has biased composition (polar residues). Basic and acidic residues predominate over residues 241–250 (MLKKLLGKKD).

The protein belongs to the PTH family. Monomer.

The protein resides in the cytoplasm. It catalyses the reaction an N-acyl-L-alpha-aminoacyl-tRNA + H2O = an N-acyl-L-amino acid + a tRNA + H(+). Functionally, hydrolyzes ribosome-free peptidyl-tRNAs (with 1 or more amino acids incorporated), which drop off the ribosome during protein synthesis, or as a result of ribosome stalling. Catalyzes the release of premature peptidyl moieties from peptidyl-tRNA molecules trapped in stalled 50S ribosomal subunits, and thus maintains levels of free tRNAs and 50S ribosomes. The chain is Peptidyl-tRNA hydrolase from Brucella abortus (strain 2308).